Here is a 261-residue protein sequence, read N- to C-terminus: uncharacterized protein (261 aa).

A signal peptide spans 1 to 22; the sequence is MRDSKRVVLYISIMVLSIFIIG. Cysteine 23 carries N-palmitoyl cysteine lipidation. Cysteine 23 carries the S-diacylglycerol cysteine lipid modification.

The protein belongs to the staphylococcal tandem lipoprotein family.

It is found in the cell membrane. This is an uncharacterized protein from Staphylococcus aureus (strain N315).